The following is a 449-amino-acid chain: Methylenetetrahydrofolate--tRNA-(uracil-5-)-methyltransferase TrmFO (449 aa).

9–14 (GGGMAG) is an FAD binding site.

It belongs to the MnmG family. TrmFO subfamily. It depends on FAD as a cofactor.

The protein resides in the cytoplasm. It catalyses the reaction uridine(54) in tRNA + (6R)-5,10-methylene-5,6,7,8-tetrahydrofolate + NADH + H(+) = 5-methyluridine(54) in tRNA + (6S)-5,6,7,8-tetrahydrofolate + NAD(+). The enzyme catalyses uridine(54) in tRNA + (6R)-5,10-methylene-5,6,7,8-tetrahydrofolate + NADPH + H(+) = 5-methyluridine(54) in tRNA + (6S)-5,6,7,8-tetrahydrofolate + NADP(+). In terms of biological role, catalyzes the folate-dependent formation of 5-methyl-uridine at position 54 (M-5-U54) in all tRNAs. The protein is Methylenetetrahydrofolate--tRNA-(uracil-5-)-methyltransferase TrmFO of Ruegeria pomeroyi (strain ATCC 700808 / DSM 15171 / DSS-3) (Silicibacter pomeroyi).